The sequence spans 274 residues: Large ribosomal subunit protein uL2 (274 aa).

Disordered stretches follow at residues 21–59 and 223–274; these read KVGL…GGHK and VAMN…QLKG. Residues 32–42 show a composition bias toward low complexity; sequence SLTSGKKSSGG. The span at 45 to 59 shows a compositional bias: basic residues; it reads NHGRITTRHRGGGHK. The segment covering 263–274 has biased composition (basic and acidic residues); the sequence is KSSDKYIKQLKG.

Belongs to the universal ribosomal protein uL2 family. In terms of assembly, part of the 50S ribosomal subunit. Forms a bridge to the 30S subunit in the 70S ribosome.

In terms of biological role, one of the primary rRNA binding proteins. Required for association of the 30S and 50S subunits to form the 70S ribosome, for tRNA binding and peptide bond formation. It has been suggested to have peptidyltransferase activity; this is somewhat controversial. Makes several contacts with the 16S rRNA in the 70S ribosome. In Wolbachia sp. subsp. Drosophila simulans (strain wRi), this protein is Large ribosomal subunit protein uL2.